Reading from the N-terminus, the 341-residue chain is MKKYKAGIINVTGYAGLELARILESHPSVELCSVTGRSLAGKKLSDVFPYLHRLDLPITENLEGQVDVAFLALPHKEGAALVPALLEKGMRVIDISADFRLKDPALYQAWYGFEHPCPGLLEEAVYGLPELKRKDIAGARLVANPGCYPTSAILGLVPAFKSDLIEPSAIIDAKSGLSGSGRTPTVKTIFCEADEDVCAYSIGTHRHQPEIAQELCRASGGVIPRVTFCPHLVPMSRGILSTAYARLKQPVTDEEVKEIYRQFYKDEPFVKVTAEPPHTRYTRGTNMCFIYPVVDALNEQLIVISCIDNLVKGAAGQAVQNMNIMLGLAETEGLEAMATLP.

Residue Cys-147 is part of the active site.

This sequence belongs to the NAGSA dehydrogenase family. Type 1 subfamily.

It localises to the cytoplasm. It catalyses the reaction N-acetyl-L-glutamate 5-semialdehyde + phosphate + NADP(+) = N-acetyl-L-glutamyl 5-phosphate + NADPH + H(+). The protein operates within amino-acid biosynthesis; L-arginine biosynthesis; N(2)-acetyl-L-ornithine from L-glutamate: step 3/4. Its function is as follows. Catalyzes the NADPH-dependent reduction of N-acetyl-5-glutamyl phosphate to yield N-acetyl-L-glutamate 5-semialdehyde. The sequence is that of N-acetyl-gamma-glutamyl-phosphate reductase from Dehalococcoides mccartyi (strain ATCC BAA-2100 / JCM 16839 / KCTC 5957 / BAV1).